The sequence spans 443 residues: MREIVHIQGGQCGNQIGAKFWEVVSDEHGVDPTGTYHGDSDLQLERINVYFNEATGGRYVPRAILMDLEPGTMDSVRSGPYGQIFRPDNFVFGQTGAGNNWAKGHYTEGAELIDSVLDVVRKEAESCDCLQGFQVCHSLGGGTGSGMGTLLISKIREEYPDRMMLTFSVVPSPKVSDTVVEPYNATLSVHQLVENADECMVLDNEALYDICFRTLKLTTPTFGDLNHLISAVMSGITCCLRFPGQLNADLRKLAVNLIPFPRLHFFMVGFTPLTSRGSQQYRALTVPELTQQMWDAKNMMCAADPRHGRYLTASALFRGRMSTKEVDEQMLNVQNKNSSYFVEWIPNNVKSSVCDIPPKGLKMSATFIGNSTAIQEMFKRVSEQFTAMFRRKAFLHWYTGEGMDEMEFTEAESNMNDLVSEYQQYQDASAEEEGEFEGEEEEA.

GTP is bound by residues Gln-11, Glu-69, Ser-138, Gly-142, Thr-143, Gly-144, Asn-204, and Asn-226. Glu-69 serves as a coordination point for Mg(2+). The segment at 424–443 (QYQDASAEEEGEFEGEEEEA) is disordered. Residues 429-443 (SAEEEGEFEGEEEEA) show a composition bias toward acidic residues.

The protein belongs to the tubulin family. In terms of assembly, dimer of alpha and beta chains. A typical microtubule is a hollow water-filled tube with an outer diameter of 25 nm and an inner diameter of 15 nM. Alpha-beta heterodimers associate head-to-tail to form protofilaments running lengthwise along the microtubule wall with the beta-tubulin subunit facing the microtubule plus end conferring a structural polarity. Microtubules usually have 13 protofilaments but different protofilament numbers can be found in some organisms and specialized cells. Mg(2+) is required as a cofactor.

The protein resides in the cytoplasm. It localises to the cytoskeleton. Functionally, tubulin is the major constituent of microtubules, a cylinder consisting of laterally associated linear protofilaments composed of alpha- and beta-tubulin heterodimers. Microtubules grow by the addition of GTP-tubulin dimers to the microtubule end, where a stabilizing cap forms. Below the cap, tubulin dimers are in GDP-bound state, owing to GTPase activity of alpha-tubulin. In Chlamydomonas incerta, this protein is Tubulin beta chain (TUBB).